A 368-amino-acid polypeptide reads, in one-letter code: tRNA-specific 2-thiouridylase MnmA (368 aa).

ATP is bound by residues Gly11–Ser18 and Met37. An interaction with target base in tRNA region spans residues Asn97–Asp99. The Nucleophile role is filled by Cys102. An intrachain disulfide couples Cys102 to Cys199. Gly127 contacts ATP. The interval Lys149 to Gln151 is interaction with tRNA. Cys199 acts as the Cysteine persulfide intermediate in catalysis. Positions Arg311 to Tyr312 are interaction with tRNA.

Belongs to the MnmA/TRMU family. Interacts with TusE.

The protein resides in the cytoplasm. The enzyme catalyses S-sulfanyl-L-cysteinyl-[protein] + uridine(34) in tRNA + AH2 + ATP = 2-thiouridine(34) in tRNA + L-cysteinyl-[protein] + A + AMP + diphosphate + H(+). Its function is as follows. Catalyzes the 2-thiolation of uridine at the wobble position (U34) of tRNA(Lys), tRNA(Glu) and tRNA(Gln), leading to the formation of s(2)U34, the first step of tRNA-mnm(5)s(2)U34 synthesis. Sulfur is provided by IscS, via a sulfur-relay system. Binds ATP and its substrate tRNAs. The protein is tRNA-specific 2-thiouridylase MnmA of Escherichia coli O1:K1 / APEC.